A 455-amino-acid polypeptide reads, in one-letter code: Aminopeptidase YwaD (455 aa).

The first 31 residues, 1–31 (MKKLLTVMTMAVLTAGTLLLPAQSVTPAAHA), serve as a signal peptide directing secretion. H250, D262, E295, D323, and H401 together coordinate Zn(2+).

This sequence belongs to the peptidase M28 family. M28B subfamily. Monomer. Zn(2+) is required as a cofactor.

It localises to the secreted. The enzyme catalyses Release of N-terminal Arg and Lys from oligopeptides when P1' is not Pro. Also acts on arylamides of Arg and Lys.. It catalyses the reaction Release of an N-terminal amino acid, preferentially leucine, but not glutamic or aspartic acids.. Its function is as follows. Catalyzes the hydrolysis of a range of N-terminal amino acids. This is Aminopeptidase YwaD (ywaD) from Bacillus subtilis (strain 168).